The primary structure comprises 503 residues: Transmembrane prolyl 4-hydroxylase (503 aa).

The segment at 1–49 (MAAAVATVQRPEAETVEEASNLQWPLPPEHRPSGAATRPGDSEDAPVRP) is disordered. Residues 1 to 61 (MAAAVATVQR…KPRGICSRAY (61 aa)) are Cytoplasmic-facing. The chain crosses the membrane as a helical; Signal-anchor for type II membrane protein span at residues 62-82 (FLVLMVFVHLYLGNVLALLLF). Residues 83–503 (VHYSNGDEST…RAYSDARVEL (421 aa)) are Lumenal-facing. The disordered stretch occupies residues 90–110 (ESTDPGPQRREQSPQPVPTLG). 2 consecutive EF-hand domains span residues 186–221 (AMQVSQLDLFQLLDQNHDGRLQLREVLAQTRLGNGR) and 225–260 (PENIQEMYSAIKADPDGDGVLSLQEFSNMDLRDFHK). Residues aspartate 199, asparagine 201, aspartate 203, arginine 205, glutamate 210, aspartate 238, aspartate 240, aspartate 242, and glutamate 249 each contribute to the Ca(2+) site. Residues 310–461 (EFSEPLQVVR…KWIANNWINV (152 aa)) form the Fe2OG dioxygenase domain. Fe cation is bound by residues histidine 329 and aspartate 331. N-linked (GlcNAc...) asparagine glycosylation is found at asparagine 349 and asparagine 369. Glutamate 375 contacts Fe cation. A glycan (N-linked (GlcNAc...) asparagine) is linked at asparagine 383. Residue lysine 452 coordinates 2-oxoglutarate.

As to quaternary structure, homodimer. Fe(2+) is required as a cofactor. It depends on L-ascorbate as a cofactor. Post-translationally, glycosylated. Highest expression levels are detected in the eye and brain, especially in the retinal epithelium cells and cortical neurons. Also expressed in skeletal muscle, lung, heart, adrenal gland, kidney, prostate, thyroid and testis.

The protein localises to the endoplasmic reticulum membrane. It carries out the reaction L-prolyl-[hypoxia-inducible factor alpha subunit] + 2-oxoglutarate + O2 = trans-4-hydroxy-L-prolyl-[hypoxia-inducible factor alpha subunit] + succinate + CO2. Its function is as follows. Catalyzes the post-translational formation of 4-hydroxyproline in hypoxia-inducible factor (HIF) alpha proteins. Hydroxylates HIF1A at 'Pro-402' and 'Pro-564'. May function as a cellular oxygen sensor and, under normoxic conditions, may target HIF through the hydroxylation for proteasomal degradation via the von Hippel-Lindau ubiquitination complex. This Mus musculus (Mouse) protein is Transmembrane prolyl 4-hydroxylase (P4htm).